The following is a 303-amino-acid chain: Putative 1-phosphofructokinase (303 aa).

ATP is bound by residues Ser217 to Gly222 and Gly249 to Asp250. Asp250 (proton acceptor) is an active-site residue.

The protein belongs to the carbohydrate kinase PfkB family.

It carries out the reaction beta-D-fructose 1-phosphate + ATP = beta-D-fructose 1,6-bisphosphate + ADP + H(+). In terms of biological role, catalyzes the ATP-dependent phosphorylation of fructose-l-phosphate to fructose-l,6-bisphosphate. The sequence is that of Putative 1-phosphofructokinase (fruK) from Mycoplasma genitalium (strain ATCC 33530 / DSM 19775 / NCTC 10195 / G37) (Mycoplasmoides genitalium).